The primary structure comprises 89 residues: Small ribosomal subunit protein bS20 (89 aa).

A disordered region spans residues 1–20 (MANHKSAEKRARQTIKRTER).

It belongs to the bacterial ribosomal protein bS20 family.

In terms of biological role, binds directly to 16S ribosomal RNA. The chain is Small ribosomal subunit protein bS20 from Campylobacter curvus (strain 525.92).